The chain runs to 316 residues: Acetyl-coenzyme A carboxylase carboxyl transferase subunit alpha (316 aa).

The 255-residue stretch at 39–293 (RLQDKSKALT…RGELLAQLKM (255 aa)) folds into the CoA carboxyltransferase C-terminal domain.

This sequence belongs to the AccA family. Acetyl-CoA carboxylase is a heterohexamer composed of biotin carboxyl carrier protein (AccB), biotin carboxylase (AccC) and two subunits each of ACCase subunit alpha (AccA) and ACCase subunit beta (AccD).

It localises to the cytoplasm. The enzyme catalyses N(6)-carboxybiotinyl-L-lysyl-[protein] + acetyl-CoA = N(6)-biotinyl-L-lysyl-[protein] + malonyl-CoA. It participates in lipid metabolism; malonyl-CoA biosynthesis; malonyl-CoA from acetyl-CoA: step 1/1. Component of the acetyl coenzyme A carboxylase (ACC) complex. First, biotin carboxylase catalyzes the carboxylation of biotin on its carrier protein (BCCP) and then the CO(2) group is transferred by the carboxyltransferase to acetyl-CoA to form malonyl-CoA. In Pseudomonas aeruginosa (strain UCBPP-PA14), this protein is Acetyl-coenzyme A carboxylase carboxyl transferase subunit alpha.